The primary structure comprises 55 residues: Neurotoxin BmP08 (55 aa).

Positions 1 to 23 (MKIFFAVLVILVLFSMLIWTAYG) are cleaved as a signal peptide. Disulfide bonds link Cys30-Cys45, Cys36-Cys50, and Cys39-Cys53.

Expressed by the venom gland.

Its subcellular location is the secreted. In Olivierus martensii (Manchurian scorpion), this protein is Neurotoxin BmP08.